We begin with the raw amino-acid sequence, 1447 residues long: Netrin receptor DCC (1447 aa).

The N-terminal stretch at 1–25 (MENSLGCVWVPKLAFVLFGASLLSA) is a signal peptide. The Extracellular segment spans residues 26 to 1097 (HLQVTGFQIK…GSVTPQKNSN (1072 aa)). Ig-like C2-type domains are found at residues 36–135 (PFTS…AKVT), 139–229 (PLRF…AEVR), 234–326 (PGLH…AELT), and 331–416 (PWFL…AQLI). N-linked (GlcNAc...) asparagine glycosylation is found at asparagine 60 and asparagine 94. 3 disulfide bridges follow: cysteine 61–cysteine 117, cysteine 161–cysteine 212, and cysteine 261–cysteine 310. Asparagine 299 and asparagine 318 each carry an N-linked (GlcNAc...) asparagine glycan. Cysteine 352 and cysteine 400 form a disulfide bridge. 6 consecutive Fibronectin type-III domains span residues 431-524 (APRD…TQPE), 530-620 (PVEN…TLSD), 625-718 (PPQN…TPEN), 728-821 (QPSS…TDPT), 846-942 (PPVG…TYEA), and 947-1044 (APKD…TLKV). Asparagine 478 is a glycosylation site (N-linked (GlcNAc...) asparagine). Asparagine 628 and asparagine 702 each carry an N-linked (GlcNAc...) asparagine glycan. Residues 1098–1122 (LLVITVVTVGVLTVLVVVIVAVICT) form a helical membrane-spanning segment. The Cytoplasmic segment spans residues 1123–1447 (RRSSAQQRKK…QLNAITGSAF (325 aa)). Disordered stretches follow at residues 1126–1153 (SAQQ…PPDL) and 1166–1220 (EKPT…MSTL). Basic residues predominate over residues 1129 to 1143 (QRKKRATHSVSKRKG). Residues 1144 to 1153 (SQKDLRPPDL) show a composition bias toward basic and acidic residues. A Phosphoserine; by MAPK1 modification is found at serine 1178. Polar residues predominate over residues 1179–1220 (PIQSCQDLTPVSHSQSETQMGSKSASHSGQDTEDAGSSMSTL). Threonine 1187 is subject to Phosphothreonine; by MAPK1. At serine 1267 the chain carries Phosphoserine; by MAPK1. 2 disordered regions span residues 1291-1329 (RGFG…APSR) and 1394-1419 (LLPV…PASV). Over residues 1297–1311 (RTQSVSEGPTTQQQP) the composition is skewed to polar residues.

This sequence belongs to the immunoglobulin superfamily. DCC family. In terms of assembly, interacts with the cytoplasmic part of UNC5A, UNC5B, UNC5C and probably UNC5D. Interacts with MAPK1. Interacts with NTN1. Interacts with DSCAM. Interacts with PTK2/FAK1. Interacts with MYO10. Interacts with CBLN4; this interaction can be competed by NTN1. Interacts with SIAH1 and SIAH2. Ubiquitinated; mediated by SIAH1 or SIAH2 and leading to its subsequent proteasomal degradation. In terms of tissue distribution, in the embryo, expressed at high levels in the developing brain and neural tube. In the embryo, expressed in developing neurons of the telencephalic cortical plate and in developing brainstem nuclei. In adult, highly expressed in brain with very low levels found in testis, heart and thymus. Isoform C is expressed only in the embryo.

It localises to the membrane. Its function is as follows. Receptor for netrin required for axon guidance. Mediates axon attraction of neuronal growth cones in the developing nervous system upon ligand binding. Its association with UNC5 proteins may trigger signaling for axon repulsion. It also acts as a dependence receptor required for apoptosis induction when not associated with netrin ligand. Implicated as a tumor suppressor gene. This Mus musculus (Mouse) protein is Netrin receptor DCC (Dcc).